A 273-amino-acid polypeptide reads, in one-letter code: 2,3,4,5-tetrahydropyridine-2,6-dicarboxylate N-succinyltransferase (273 aa).

Positions 104 and 141 each coordinate substrate.

The protein belongs to the transferase hexapeptide repeat family. As to quaternary structure, homotrimer.

It is found in the cytoplasm. It catalyses the reaction (S)-2,3,4,5-tetrahydrodipicolinate + succinyl-CoA + H2O = (S)-2-succinylamino-6-oxoheptanedioate + CoA. Its pathway is amino-acid biosynthesis; L-lysine biosynthesis via DAP pathway; LL-2,6-diaminopimelate from (S)-tetrahydrodipicolinate (succinylase route): step 1/3. The sequence is that of 2,3,4,5-tetrahydropyridine-2,6-dicarboxylate N-succinyltransferase from Neisseria meningitidis serogroup C (strain 053442).